Reading from the N-terminus, the 576-residue chain is Sulfite reductase [NADPH] hemoprotein beta-component (576 aa).

Residues Cys-439, Cys-445, Cys-485, and Cys-489 each coordinate [4Fe-4S] cluster. Cys-489 contacts siroheme.

Belongs to the nitrite and sulfite reductase 4Fe-4S domain family. As to quaternary structure, alpha(8)-beta(8). The alpha component is a flavoprotein, the beta component is a hemoprotein. Siroheme is required as a cofactor. The cofactor is [4Fe-4S] cluster.

It carries out the reaction hydrogen sulfide + 3 NADP(+) + 3 H2O = sulfite + 3 NADPH + 4 H(+). It participates in sulfur metabolism; hydrogen sulfide biosynthesis; hydrogen sulfide from sulfite (NADPH route): step 1/1. In terms of biological role, component of the sulfite reductase complex that catalyzes the 6-electron reduction of sulfite to sulfide. This is one of several activities required for the biosynthesis of L-cysteine from sulfate. The sequence is that of Sulfite reductase [NADPH] hemoprotein beta-component from Aliivibrio salmonicida (strain LFI1238) (Vibrio salmonicida (strain LFI1238)).